A 156-amino-acid polypeptide reads, in one-letter code: MNLNATILGQAIAFVLFVIFCMKYVWPPIMAAIEKRQQEIADGLSSAERAKKDLDLAQANATDQLKKAKAEAQVIIEQASKRKAQILDEAKAEAEQERNKIVAQAQAEIDAERKRAREELRKQVAMLAIAGAEKIIERSVDEAANSDIVDKLVAEL.

Residues 11–31 (AIAFVLFVIFCMKYVWPPIMA) form a helical membrane-spanning segment.

This sequence belongs to the ATPase B chain family. F-type ATPases have 2 components, F(1) - the catalytic core - and F(0) - the membrane proton channel. F(1) has five subunits: alpha(3), beta(3), gamma(1), delta(1), epsilon(1). F(0) has three main subunits: a(1), b(2) and c(10-14). The alpha and beta chains form an alternating ring which encloses part of the gamma chain. F(1) is attached to F(0) by a central stalk formed by the gamma and epsilon chains, while a peripheral stalk is formed by the delta and b chains.

The protein localises to the cell inner membrane. In terms of biological role, f(1)F(0) ATP synthase produces ATP from ADP in the presence of a proton or sodium gradient. F-type ATPases consist of two structural domains, F(1) containing the extramembraneous catalytic core and F(0) containing the membrane proton channel, linked together by a central stalk and a peripheral stalk. During catalysis, ATP synthesis in the catalytic domain of F(1) is coupled via a rotary mechanism of the central stalk subunits to proton translocation. Functionally, component of the F(0) channel, it forms part of the peripheral stalk, linking F(1) to F(0). This chain is ATP synthase subunit b, found in Yersinia pseudotuberculosis serotype O:1b (strain IP 31758).